Here is a 509-residue protein sequence, read N- to C-terminus: tRNA-2-methylthio-N(6)-dimethylallyladenosine synthase (509 aa).

Polar residues predominate over residues 1-15; that stretch reads MNEQQRLASQQVNSS. The segment at 1 to 26 is disordered; it reads MNEQQRLASQQVNSSTKKEEKDYSKY. Basic and acidic residues predominate over residues 16-25; that stretch reads TKKEEKDYSK. Residues 66–184 form the MTTase N-terminal domain; it reads RKFYIRTYGC…LPYILKDAMF (119 aa). [4Fe-4S] cluster is bound by residues cysteine 75, cysteine 111, cysteine 145, cysteine 221, cysteine 225, and cysteine 228. Positions 207–437 constitute a Radical SAM core domain; that stretch reads RRGDIKAWVN…NALVNKLAIE (231 aa). Residues 440 to 503 enclose the TRAM domain; it reads NRYKGQIVEV…TWSLNGELVE (64 aa).

The protein belongs to the methylthiotransferase family. MiaB subfamily. Monomer. Requires [4Fe-4S] cluster as cofactor.

It localises to the cytoplasm. The enzyme catalyses N(6)-dimethylallyladenosine(37) in tRNA + (sulfur carrier)-SH + AH2 + 2 S-adenosyl-L-methionine = 2-methylsulfanyl-N(6)-dimethylallyladenosine(37) in tRNA + (sulfur carrier)-H + 5'-deoxyadenosine + L-methionine + A + S-adenosyl-L-homocysteine + 2 H(+). In terms of biological role, catalyzes the methylthiolation of N6-(dimethylallyl)adenosine (i(6)A), leading to the formation of 2-methylthio-N6-(dimethylallyl)adenosine (ms(2)i(6)A) at position 37 in tRNAs that read codons beginning with uridine. This Bacillus cereus (strain AH187) protein is tRNA-2-methylthio-N(6)-dimethylallyladenosine synthase.